A 449-amino-acid chain; its full sequence is Glutamate--tRNA ligase 1 (449 aa).

The 'HIGH' region signature appears at 11–21 (PSPTGSLHVGN). Residues 242 to 246 (PLSKR) carry the 'KMSKS' region motif. ATP is bound at residue Lys-245.

Belongs to the class-I aminoacyl-tRNA synthetase family. Glutamate--tRNA ligase type 1 subfamily. Monomer.

The protein resides in the cytoplasm. The catalysed reaction is tRNA(Glu) + L-glutamate + ATP = L-glutamyl-tRNA(Glu) + AMP + diphosphate. In terms of biological role, catalyzes the attachment of glutamate to tRNA(Glu) in a two-step reaction: glutamate is first activated by ATP to form Glu-AMP and then transferred to the acceptor end of tRNA(Glu). The sequence is that of Glutamate--tRNA ligase 1 from Parvibaculum lavamentivorans (strain DS-1 / DSM 13023 / NCIMB 13966).